Here is a 567-residue protein sequence, read N- to C-terminus: Urease subunit alpha (567 aa).

In terms of domain architecture, Urease spans 129–567 (GGVDTHIHWI…LPMAQRYFLF (439 aa)). Ni(2+)-binding residues include His-134, His-136, and Lys-217. The residue at position 217 (Lys-217) is an N6-carboxylysine. Residue His-219 coordinates substrate. Positions 246 and 272 each coordinate Ni(2+). The active-site Proton donor is His-320. Position 360 (Asp-360) interacts with Ni(2+).

It belongs to the metallo-dependent hydrolases superfamily. Urease alpha subunit family. In terms of assembly, heterotrimer of UreA (gamma), UreB (beta) and UreC (alpha) subunits. Three heterotrimers associate to form the active enzyme. Ni cation serves as cofactor. In terms of processing, carboxylation allows a single lysine to coordinate two nickel ions.

The protein resides in the cytoplasm. It carries out the reaction urea + 2 H2O + H(+) = hydrogencarbonate + 2 NH4(+). Its pathway is nitrogen metabolism; urea degradation; CO(2) and NH(3) from urea (urease route): step 1/1. The protein is Urease subunit alpha of Citrobacter koseri (strain ATCC BAA-895 / CDC 4225-83 / SGSC4696).